The chain runs to 89 residues: Small ribosomal subunit protein uS19 (89 aa).

The protein belongs to the universal ribosomal protein uS19 family.

Its function is as follows. Protein S19 forms a complex with S13 that binds strongly to the 16S ribosomal RNA. This Bacteroides thetaiotaomicron (strain ATCC 29148 / DSM 2079 / JCM 5827 / CCUG 10774 / NCTC 10582 / VPI-5482 / E50) protein is Small ribosomal subunit protein uS19.